The following is a 550-amino-acid chain: Iduronate 2-sulfatase (550 aa).

The first 25 residues, 1-25 (MPPPRTGRGLLWLGLVLSSVCVALG), serve as a signal peptide directing secretion. The propeptide occupies 26–33 (SETQANST). Ca(2+) is bound by residues aspartate 45, aspartate 46, and cysteine 84. Catalysis depends on cysteine 84, which acts as the Nucleophile. Position 84 is a 3-oxoalanine (Cys) (cysteine 84). Residue asparagine 115 is glycosylated (N-linked (GlcNAc...) asparagine). Residue histidine 138 is part of the active site. Asparagine 144 carries an N-linked (GlcNAc...) asparagine glycan. Cysteine 171 and cysteine 184 are oxidised to a cystine. 3 N-linked (GlcNAc...) asparagine glycosylation sites follow: asparagine 246, asparagine 280, and asparagine 325. 2 residues coordinate Ca(2+): aspartate 334 and histidine 335. Residues cysteine 422 and cysteine 432 are joined by a disulfide bond. N-linked (GlcNAc...) asparagine glycans are attached at residues asparagine 513 and asparagine 537.

The protein belongs to the sulfatase family. In terms of assembly, monomer. The 58-kDa mature form is composed of two chains resulting from proteolitic processing, the 42-kDa chain and the 14-kDa chain that remain stably associated and form the 58-kDa intermediate form which is enzymatically active. Ca(2+) serves as cofactor. Post-translationally, synthesized as a 75-kDa precursor form in the endoplasmic reticulum (ER), and then processed by proteolytic cleavage through various intermediates to yield a 55-kDa mature form, with the release of an 18 kDa polypeptide. In terms of processing, the conversion to 3-oxoalanine (also known as C-formylglycine, FGly), of a serine or cysteine residue in prokaryotes and of a cysteine residue in eukaryotes, is critical for catalytic activity. Liver, kidney, lung, and placenta.

The protein resides in the lysosome. It carries out the reaction Hydrolysis of the 2-sulfate groups of the L-iduronate 2-sulfate units of dermatan sulfate, heparan sulfate and heparin.. Functionally, lysosomal enzyme involved in the degradation pathway of dermatan sulfate and heparan sulfate. The chain is Iduronate 2-sulfatase (IDS) from Homo sapiens (Human).